The chain runs to 44 residues: Antifungal protein R (44 aa).

Belongs to the thaumatin family.

Its function is as follows. Has antifungal activity. Inhibits the growth of Trichoderma viridae and Candida albicans. The polypeptide is Antifungal protein R (Hordeum vulgare (Barley)).